The sequence spans 302 residues: 33 kDa chaperonin (302 aa).

Disulfide bonds link Cys-234–Cys-236 and Cys-267–Cys-270.

Belongs to the HSP33 family. In terms of processing, under oxidizing conditions two disulfide bonds are formed involving the reactive cysteines. Under reducing conditions zinc is bound to the reactive cysteines and the protein is inactive.

The protein resides in the cytoplasm. Redox regulated molecular chaperone. Protects both thermally unfolding and oxidatively damaged proteins from irreversible aggregation. Plays an important role in the bacterial defense system toward oxidative stress. The sequence is that of 33 kDa chaperonin from Neisseria meningitidis serogroup A / serotype 4A (strain DSM 15465 / Z2491).